Consider the following 263-residue polypeptide: Izumo sperm-egg fusion protein 3 (263 aa).

The signal sequence occupies residues 1–22 (MGDLWVLLFSSLSLAAFHGVRG). Topologically, residues 23–176 (CLECDPKFTE…EDPKTAENRE (154 aa)) are extracellular. N-linked (GlcNAc...) asparagine glycosylation is found at Asn98 and Asn128. A helical transmembrane segment spans residues 177 to 197 (ISLYLIFIAEAVILASAVLLF). Topologically, residues 198-263 (HVCISHRRKM…CAESEMQTGT (66 aa)) are cytoplasmic. Residues 241–263 (GRSNSNSLTGEPTCAESEMQTGT) are disordered.

This sequence belongs to the Izumo family. Monomer and homodimer. As to expression, sperm-specific (at protein level).

It localises to the cell membrane. Its subcellular location is the cytoplasmic vesicle. The protein resides in the secretory vesicle. The protein localises to the acrosome inner membrane. In terms of biological role, plays an important role in the biogenesis of the acrosome during sperm development. In Mus musculus (Mouse), this protein is Izumo sperm-egg fusion protein 3 (Izumo3).